The chain runs to 246 residues: E3 ubiquitin-protein ligase MARCHF2 (246 aa).

An RING-CH-type zinc finger spans residues aspartate 56 to glutamate 116. Residues aspartate 56–glutamate 116 form a required for inhibition of HIV-1 virus production and VSV G protein expression region. 8 residues coordinate Zn(2+): cysteine 64, cysteine 67, cysteine 80, cysteine 82, histidine 90, cysteine 93, cysteine 106, and cysteine 109. Residues proline 121–valine 246 are required for interaction with IKBKG. A run of 2 helical transmembrane segments spans residues leucine 138–leucine 158 and alanine 175–valine 195.

In terms of assembly, interacts with STX6; the interaction promotes MARCHF2-mediated ubiquitination and degradation of CFTR. Interacts with MARCHF3. Interacts with GOPC/CAL; the interaction leads to CFTR ubiquitination and degradation. Interacts with CFTR; the interaction leads to CFTR ubiqtuitination and degradation. Interacts (via PDZ domain) with DLG1 (via PDZ domains); the interaction leads to DLG1 ubiqtuitination and degradation. Interacts with ERGIC3. Interacts with ADRB2. Interacts with IKBKG/NEMO; during the late stages of macrophage viral and bacterial infection; the interaction leads to ubiquitination and degradation of IKBKG/NEMO. As to expression, broadly expressed.

The protein localises to the endoplasmic reticulum membrane. It is found in the lysosome membrane. The protein resides in the endosome membrane. Its subcellular location is the golgi apparatus membrane. It localises to the cytoplasm. The protein localises to the cell membrane. The catalysed reaction is S-ubiquitinyl-[E2 ubiquitin-conjugating enzyme]-L-cysteine + [acceptor protein]-L-lysine = [E2 ubiquitin-conjugating enzyme]-L-cysteine + N(6)-ubiquitinyl-[acceptor protein]-L-lysine.. It participates in protein modification; protein ubiquitination. Functionally, E3 ubiquitin-protein ligase that may mediate ubiquitination of TFRC and CD86, and promote their subsequent endocytosis and sorting to lysosomes via multivesicular bodies. E3 ubiquitin ligases accept ubiquitin from an E2 ubiquitin-conjugating enzyme in the form of a thioester and then directly transfer the ubiquitin to targeted substrates. Together with GOPC/CAL mediates the ubiquitination and lysosomal degradation of CFTR. Ubiquitinates and therefore mediates the degradation of DLG1. Regulates the intracellular trafficking and secretion of alpha1-antitrypsin/SERPINA1 and HP/haptoglobin via ubiquitination and degradation of the cargo receptor ERGIC3. Negatively regulates the antiviral and antibacterial immune response by repression of the NF-kB and type 1 IFN signaling pathways, via MARCHF2-mediated K48-linked polyubiquitination of IKBKG/NEMO, resulting in its proteasomal degradation. May be involved in endosomal trafficking through interaction with STX6. (Microbial infection) Positively regulates the degradation of Vesicular stomatitis virus (VSV) G protein via the lysosomal degradation pathway. Represses HIV-1 viral production and may inhibit the translocation of HIV-1 env to the cell surface, resulting in decreased viral cell-cell transmission. In Homo sapiens (Human), this protein is E3 ubiquitin-protein ligase MARCHF2.